A 397-amino-acid chain; its full sequence is CCA-adding enzyme (397 aa).

ATP-binding residues include Gly-26 and Arg-29. The CTP site is built by Gly-26 and Arg-29. Positions 39 and 41 each coordinate Mg(2+). 5 residues coordinate ATP: Arg-110, Asp-153, Arg-156, Arg-159, and Arg-162. CTP-binding residues include Arg-110, Asp-153, Arg-156, Arg-159, and Arg-162.

This sequence belongs to the tRNA nucleotidyltransferase/poly(A) polymerase family. Bacterial CCA-adding enzyme type 3 subfamily. As to quaternary structure, homodimer. Requires Mg(2+) as cofactor.

It carries out the reaction a tRNA precursor + 2 CTP + ATP = a tRNA with a 3' CCA end + 3 diphosphate. The enzyme catalyses a tRNA with a 3' CCA end + 2 CTP + ATP = a tRNA with a 3' CCACCA end + 3 diphosphate. Its function is as follows. Catalyzes the addition and repair of the essential 3'-terminal CCA sequence in tRNAs without using a nucleic acid template. Adds these three nucleotides in the order of C, C, and A to the tRNA nucleotide-73, using CTP and ATP as substrates and producing inorganic pyrophosphate. tRNA 3'-terminal CCA addition is required both for tRNA processing and repair. Also involved in tRNA surveillance by mediating tandem CCA addition to generate a CCACCA at the 3' terminus of unstable tRNAs. While stable tRNAs receive only 3'-terminal CCA, unstable tRNAs are marked with CCACCA and rapidly degraded. The polypeptide is CCA-adding enzyme (Bacillus cereus (strain B4264)).